The primary structure comprises 383 residues: GTPase-interacting component 2 (383 aa).

A disordered region spans residues 63–106; that stretch reads SNKKNIELPPLSPNSHPSCHHRRSNSNSAKSKESSSSSSSANKT. Residues 87 to 105 are compositionally biased toward low complexity; it reads NSNSAKSKESSSSSSSANK. Residues 134-147 form the CRIB domain; the sequence is ISTPFDFQHISHAD. Residues 155 to 165 are compositionally biased toward polar residues; it reads EQLQEPSSLST. Positions 155 to 189 are disordered; the sequence is EQLQEPSSLSTEIKDDYTSSSSKRDSKSLNKAFVT. The span at 166–182 shows a compositional bias: basic and acidic residues; sequence EIKDDYTSSSSKRDSKS. S254, S258, S337, S345, and S367 each carry phosphoserine. The tract at residues 319–361 is disordered; that stretch reads ETPNSNKDSAKAFFPSRQSPLPKRRNSIATPSPQSKFSYSDSP. Residues 345–361 show a composition bias toward polar residues; the sequence is SIATPSPQSKFSYSDSP.

This sequence belongs to the BORG/CEP family. Interacts with GTP-bound CDC42.

The protein resides in the bud neck. Its subcellular location is the bud tip. The protein localises to the cytoplasm. It localises to the cell cortex. It is found in the cytoskeleton. Required for cell size and shape control, bud site selection, bud emergence, actin cytoskeletal organization, mitotic spindle orientation/positioning, and mating projection formation in response to mating pheromone. The sequence is that of GTPase-interacting component 2 (GIC2) from Saccharomyces cerevisiae (strain ATCC 204508 / S288c) (Baker's yeast).